Here is a 254-residue protein sequence, read N- to C-terminus: 5'-nucleotidase SurE (254 aa).

Asp-8, Asp-9, Ser-39, and Asn-91 together coordinate a divalent metal cation.

It belongs to the SurE nucleotidase family. The cofactor is a divalent metal cation.

The protein localises to the cytoplasm. It catalyses the reaction a ribonucleoside 5'-phosphate + H2O = a ribonucleoside + phosphate. Functionally, nucleotidase that shows phosphatase activity on nucleoside 5'-monophosphates. In Methylibium petroleiphilum (strain ATCC BAA-1232 / LMG 22953 / PM1), this protein is 5'-nucleotidase SurE.